The sequence spans 291 residues: uncharacterized protein (291 aa).

Positions 1-58 constitute an HTH lysR-type domain; sequence MDLKWLQTFIAAAESESFREAAEHLYLTQPAVSQHMRKLEDELDMRLFLHSGRRVVLT. A DNA-binding region (H-T-H motif) is located at residues 18–37; the sequence is FREAAEHLYLTQPAVSQHMR.

Belongs to the LysR transcriptional regulatory family.

This is an uncharacterized protein from Bacillus subtilis (strain 168).